A 498-amino-acid polypeptide reads, in one-letter code: Glycerol kinase (498 aa).

Thr-12 is a binding site for ADP. ATP contacts are provided by Thr-12, Thr-13, and Ser-14. Thr-12 provides a ligand contact to sn-glycerol 3-phosphate. Arg-16 contributes to the ADP binding site. Sn-glycerol 3-phosphate contacts are provided by Arg-82, Glu-83, and Tyr-134. Residues Arg-82, Glu-83, and Tyr-134 each contribute to the glycerol site. Residue His-230 is modified to Phosphohistidine; by HPr. Asp-244 contacts sn-glycerol 3-phosphate. Glycerol is bound by residues Asp-244 and Gln-245. Residues Thr-266 and Gly-309 each contribute to the ADP site. Residues Thr-266, Gly-309, Gln-313, and Gly-410 each coordinate ATP. 2 residues coordinate ADP: Gly-410 and Asn-414.

The protein belongs to the FGGY kinase family. Homotetramer and homodimer (in equilibrium). The phosphoenolpyruvate-dependent sugar phosphotransferase system (PTS), including enzyme I, and histidine-containing protein (HPr) are required for the phosphorylation, which leads to the activation of the enzyme.

The enzyme catalyses glycerol + ATP = sn-glycerol 3-phosphate + ADP + H(+). It functions in the pathway polyol metabolism; glycerol degradation via glycerol kinase pathway; sn-glycerol 3-phosphate from glycerol: step 1/1. Its activity is regulated as follows. Activated by phosphorylation and inhibited by fructose 1,6-bisphosphate (FBP). Its function is as follows. Key enzyme in the regulation of glycerol uptake and metabolism. Catalyzes the phosphorylation of glycerol to yield sn-glycerol 3-phosphate. This chain is Glycerol kinase, found in Staphylococcus aureus (strain Mu50 / ATCC 700699).